The sequence spans 505 residues: Glycerol kinase 3 (505 aa).

Thr-12 contacts ADP. ATP is bound by residues Thr-12, Thr-13, and Ser-14. Sn-glycerol 3-phosphate is bound at residue Thr-12. Arg-16 provides a ligand contact to ADP. 4 residues coordinate sn-glycerol 3-phosphate: Arg-82, Glu-83, Tyr-134, and Asp-249. Glycerol is bound by residues Arg-82, Glu-83, Tyr-134, Asp-249, and Gln-250. Residues Thr-271 and Gly-315 each coordinate ADP. ATP contacts are provided by Thr-271, Gly-315, Gln-319, and Gly-416. Residues Gly-416 and Asn-420 each contribute to the ADP site.

It belongs to the FGGY kinase family.

The enzyme catalyses glycerol + ATP = sn-glycerol 3-phosphate + ADP + H(+). It participates in polyol metabolism; glycerol degradation via glycerol kinase pathway; sn-glycerol 3-phosphate from glycerol: step 1/1. With respect to regulation, inhibited by fructose 1,6-bisphosphate (FBP). Functionally, key enzyme in the regulation of glycerol uptake and metabolism. Catalyzes the phosphorylation of glycerol to yield sn-glycerol 3-phosphate. The sequence is that of Glycerol kinase 3 from Streptomyces avermitilis (strain ATCC 31267 / DSM 46492 / JCM 5070 / NBRC 14893 / NCIMB 12804 / NRRL 8165 / MA-4680).